Consider the following 218-residue polypeptide: Superoxide dismutase [Mn] 1 (218 aa).

The Mn(2+) site is built by histidine 43, histidine 98, aspartate 180, and histidine 184.

It belongs to the iron/manganese superoxide dismutase family. Homodimer. The cofactor is Mn(2+).

It carries out the reaction 2 superoxide + 2 H(+) = H2O2 + O2. Its function is as follows. Destroys superoxide anion radicals which are normally produced within the cells and which are toxic to biological systems. This chain is Superoxide dismutase [Mn] 1 (sodA1), found in Bacillus cereus (strain ATCC 14579 / DSM 31 / CCUG 7414 / JCM 2152 / NBRC 15305 / NCIMB 9373 / NCTC 2599 / NRRL B-3711).